The sequence spans 137 residues: Large ribosomal subunit protein uL16 (137 aa).

Belongs to the universal ribosomal protein uL16 family. Part of the 50S ribosomal subunit.

In terms of biological role, binds 23S rRNA and is also seen to make contacts with the A and possibly P site tRNAs. The polypeptide is Large ribosomal subunit protein uL16 (Nitrobacter winogradskyi (strain ATCC 25391 / DSM 10237 / CIP 104748 / NCIMB 11846 / Nb-255)).